The chain runs to 303 residues: WD repeat-containing protein 38 (303 aa).

WD repeat units lie at residues 24–63 (QHHG…LLWR), 66–105 (GHRG…CLHV), 108–147 (GHQR…RVHL), 150–189 (GHCD…PVVS), 195–233 (GHTG…LPLQ), 236–277 (GHTI…ETLK), and 279–303 (MLDV…AVTR).

This Mus musculus (Mouse) protein is WD repeat-containing protein 38 (Wdr38).